The chain runs to 442 residues: UDP-N-acetylglucosamine 1-carboxyvinyltransferase (442 aa).

Residue 22-23 (KN) coordinates phosphoenolpyruvate. Residue R94 coordinates UDP-N-acetyl-alpha-D-glucosamine. D119 (proton donor) is an active-site residue. D309 and V331 together coordinate UDP-N-acetyl-alpha-D-glucosamine.

The protein belongs to the EPSP synthase family. MurA subfamily.

The protein resides in the cytoplasm. The enzyme catalyses phosphoenolpyruvate + UDP-N-acetyl-alpha-D-glucosamine = UDP-N-acetyl-3-O-(1-carboxyvinyl)-alpha-D-glucosamine + phosphate. Its pathway is cell wall biogenesis; peptidoglycan biosynthesis. Cell wall formation. Adds enolpyruvyl to UDP-N-acetylglucosamine. This is UDP-N-acetylglucosamine 1-carboxyvinyltransferase from Chlamydia muridarum (strain MoPn / Nigg).